The chain runs to 285 residues: NADPH-dependent 7-cyano-7-deazaguanine reductase (285 aa).

91–93 (IES) provides a ligand contact to substrate. Residue 93–94 (SK) coordinates NADPH. The active-site Thioimide intermediate is the cysteine 193. Residue aspartate 200 is the Proton donor of the active site. 232–233 (HE) is a binding site for substrate. 261–262 (RG) is a binding site for NADPH.

Belongs to the GTP cyclohydrolase I family. QueF type 2 subfamily. Homodimer.

It localises to the cytoplasm. It carries out the reaction 7-aminomethyl-7-carbaguanine + 2 NADP(+) = 7-cyano-7-deazaguanine + 2 NADPH + 3 H(+). The protein operates within tRNA modification; tRNA-queuosine biosynthesis. Functionally, catalyzes the NADPH-dependent reduction of 7-cyano-7-deazaguanine (preQ0) to 7-aminomethyl-7-deazaguanine (preQ1). The sequence is that of NADPH-dependent 7-cyano-7-deazaguanine reductase from Shewanella frigidimarina (strain NCIMB 400).